Here is a 177-residue protein sequence, read N- to C-terminus: Nicotinamide-nucleotide adenylyltransferase (177 aa).

The protein belongs to the archaeal NMN adenylyltransferase family.

The protein resides in the cytoplasm. The enzyme catalyses beta-nicotinamide D-ribonucleotide + ATP + H(+) = diphosphate + NAD(+). Its pathway is cofactor biosynthesis; NAD(+) biosynthesis; NAD(+) from nicotinamide D-ribonucleotide: step 1/1. The sequence is that of Nicotinamide-nucleotide adenylyltransferase from Halobacterium salinarum (strain ATCC 29341 / DSM 671 / R1).